Here is a 479-residue protein sequence, read N- to C-terminus: UDP-N-acetylmuramate--L-alanine ligase (479 aa).

128–134 (GAHGKTT) contacts ATP.

It belongs to the MurCDEF family.

The protein localises to the cytoplasm. The catalysed reaction is UDP-N-acetyl-alpha-D-muramate + L-alanine + ATP = UDP-N-acetyl-alpha-D-muramoyl-L-alanine + ADP + phosphate + H(+). Its pathway is cell wall biogenesis; peptidoglycan biosynthesis. Cell wall formation. The polypeptide is UDP-N-acetylmuramate--L-alanine ligase (Psychrobacter arcticus (strain DSM 17307 / VKM B-2377 / 273-4)).